Consider the following 168-residue polypeptide: Myelin basic protein (168 aa).

An N-acetylalanine modification is found at Ala-1. Ser-7 and Ser-12 each carry phosphoserine. At Tyr-14 the chain carries Phosphotyrosine. Residue Thr-17 is modified to Phosphothreonine. At Ser-19 the chain carries Phosphoserine. Residue Thr-20 is modified to Phosphothreonine. A citrulline mark is found at Arg-25 and Arg-31. Thr-35 carries the post-translational modification Phosphothreonine. The residue at position 40 (Ser-40) is a Phosphoserine. The interval 42-84 is disordered; it reads GRFFSSDRGAPKRGSGKDHAARTTHYGSLPQKSGHRPQDENPV. Omega-N-methylarginine is present on residues Arg-43 and Arg-49. An induces experimental autoimmune encephalomyelitis (EAE) region spans residues 45–86; that stretch reads FSSDRGAPKRGSGKDHAARTTHYGSLPQKSGHRPQDENPVVH. Phosphoserine is present on Ser-56. Position 65 is a phosphothreonine (Thr-65). Tyr-67 bears the Phosphotyrosine mark. Ser-74 is modified (phosphoserine). A phosphothreonine mark is found at Thr-93 and Thr-96. Position 101 is a deamidated glutamine; partial (Gln-101). Arg-105 carries the omega-N-methylarginine; alternate modification. A Symmetric dimethylarginine; alternate modification is found at Arg-105. Ser-113 is subject to Phosphoserine. Lys-120 carries the N6-acetyllysine modification. Arg-128 carries the post-translational modification Citrulline. The residue at position 145 (Gln-145) is a Deamidated glutamine. Arg-157 is subject to Citrulline. The residue at position 159 (Ser-159) is a Phosphoserine. Position 163 is a phosphoserine; by UHMK1 (Ser-163). Arg-168 carries the post-translational modification Citrulline.

It belongs to the myelin basic protein family. In terms of assembly, homodimer. Post-translationally, as in other animals, several charge isomers may be produced as a result of optional post-translational modifications, such as phosphorylation of serine or threonine residues, deamidation of glutamine or asparagine residues, citrullination and methylation of arginine residues. Phosphorylated by TAOK2, VRK2, MAPK11, MAPK12, MAPK14 and MINK1. In terms of processing, proteolytically cleaved in B cell lysosomes by cathepsin CTSG which degrades the major immunogenic MBP epitope and prevents the activation of MBP-specific autoreactive T cells. As to expression, found in both the central and the peripheral nervous system.

The protein resides in the myelin membrane. Its function is as follows. Is, with PLP, the most abundant protein component of the myelin membrane in the CNS. Has a role in both the formation and stabilization of this compact multilayer arrangement of bilayers. Each splice variant and charge isomer may have a specialized function in the assembly of an optimized, biochemically functional myelin membrane. This chain is Myelin basic protein (MBP), found in Oryctolagus cuniculus (Rabbit).